A 503-amino-acid polypeptide reads, in one-letter code: Endoglycoceramidase (503 aa).

The N-terminal stretch at Met-1–Gly-21 is a signal peptide. Residues Asn-72, Asn-108, and Asn-205 are each glycosylated (N-linked (GlcNAc...) asparagine). The Proton donor role is filled by Glu-239. 3 N-linked (GlcNAc...) asparagine glycosylation sites follow: Asn-307, Asn-409, and Asn-485.

This sequence belongs to the glycosyl hydrolase 5 (cellulase A) family.

The protein localises to the secreted. It is found in the nematocyst. The catalysed reaction is an oligoglycosyl-(1-&gt;4)-beta-D-glucosyl-(1&lt;-&gt;1)-ceramide + H2O = an oligoglycosyl-(1-&gt;4)-D-glucose + an N-acyl-sphingoid base. With respect to regulation, completely inhibited by Hg(2+). Cu(2+) and zinc have no effect on enzyme activity. Lithium, potassium, manganese, Ni(2+), calcium, magnesium and EDTA have no significant effect on enzyme activity. Enzyme requires presence of detergents such as Triton X-100 and Lubrol PX for the hydrolysis of glycosphingolipids. Taurodeoxycholate strongly inhibits the enzyme activity and SDS completely inhibits the enzyme activity. Functionally, hydrolysis of the glycosidic linkage between oligosaccharides and ceramides of glycosphingolipids, especially b-series polysialogangliosides. The chain is Endoglycoceramidase from Cyanea nozakii (Jellyfish).